A 401-amino-acid polypeptide reads, in one-letter code: Solute carrier family 22 member 17 (401 aa).

Transmembrane regions (helical) follow at residues 10-30 (GIVLLTLGLVGPCGVGGAAAG), 35-55 (IMALRFLLGFLLAGVDLGVYL), 69-89 (VALAGELVGVGGHFLFLGLAL), 100-120 (MITAPCILFLFYGWPGLFLES), 184-203 (NIWKNLLILGFTNFIAHAIR), 218-238 (FYLCSLLASGTAALACVFLGV), 247-267 (GILLLSMTLTGIASLVLLGLW), 277-297 (TFSVLGLFSSQASAILSTLLA), 309-329 (GLGLIMALGALGGLSCPAQRL), and 336-356 (FLQHVVLAACALLCILSIMLL).

The protein belongs to the major facilitator (TC 2.A.1) superfamily. Organic cation transporter (TC 2.A.1.19) family. As to expression, widely expressed.

It localises to the cell membrane. Its subcellular location is the vacuole membrane. In terms of biological role, cell surface receptor for LCN2 (24p3) that plays a key role in iron homeostasis and transport. Able to bind iron-bound LCN2 (holo-24p3), followed by internalization of holo-24p3 and release of iron, thereby increasing intracellular iron concentration and leading to inhibition of apoptosis. Also binds iron-free LCN2 (apo-24p3), followed by internalization of apo-24p3 and its association with an intracellular siderophore, leading to iron chelation and iron transfer to the extracellular medium, thereby reducing intracellular iron concentration and resulting in apoptosis. The polypeptide is Solute carrier family 22 member 17 (Slc22a17) (Mus musculus (Mouse)).